Consider the following 187-residue polypeptide: Orotate phosphoribosyltransferase (187 aa).

Residues arginine 99, lysine 100, lysine 103, histidine 105, and 125–133 contribute to the 5-phospho-alpha-D-ribose 1-diphosphate site; that span reads DDVITTGGS. Residues threonine 129 and arginine 157 each contribute to the orotate site.

It belongs to the purine/pyrimidine phosphoribosyltransferase family. PyrE subfamily. Homodimer. It depends on Mg(2+) as a cofactor.

It catalyses the reaction orotidine 5'-phosphate + diphosphate = orotate + 5-phospho-alpha-D-ribose 1-diphosphate. Its pathway is pyrimidine metabolism; UMP biosynthesis via de novo pathway; UMP from orotate: step 1/2. In terms of biological role, catalyzes the transfer of a ribosyl phosphate group from 5-phosphoribose 1-diphosphate to orotate, leading to the formation of orotidine monophosphate (OMP). This is Orotate phosphoribosyltransferase from Leptospira borgpetersenii serovar Hardjo-bovis (strain JB197).